Consider the following 428-residue polypeptide: Putative POM121-like protein 1 (428 aa).

Disordered stretches follow at residues Met-1–Pro-23, Lys-36–Leu-204, Asp-254–Gln-293, Thr-306–Leu-384, and Gly-402–Lys-428. A compositionally biased stretch (basic and acidic residues) spans Glu-44–Pro-62. The segment covering Gln-106–Thr-117 has biased composition (low complexity). 5 stretches are compositionally biased toward polar residues: residues Asn-118 to Thr-129, Ser-144 to Thr-155, Pro-260 to Thr-269, Phe-326 to Ser-347, and Pro-403 to Asn-415. The segment covering Gln-416–Lys-428 has biased composition (low complexity).

Belongs to the POM121 family.

This Homo sapiens (Human) protein is Putative POM121-like protein 1 (POM121L1P).